A 599-amino-acid polypeptide reads, in one-letter code: Stromal 70 kDa heat shock-related protein, chloroplastic (599 aa).

Positions 545 to 573 are disordered; it reads NQPGAGGEPGAAQAQHQEQSSARQIQRAK. Over residues 554–568 the composition is skewed to low complexity; the sequence is GAAQAQHQEQSSARQ.

It belongs to the heat shock protein 70 family.

It localises to the plastid. The protein resides in the chloroplast stroma. Its function is as follows. Interacts with newly imported chloroplast proteins to assist in their maturation. This chain is Stromal 70 kDa heat shock-related protein, chloroplastic (CHSP70), found in Spinacia oleracea (Spinach).